A 407-amino-acid polypeptide reads, in one-letter code: Peptidase T (407 aa).

H81 contributes to the Zn(2+) binding site. The active site involves D83. A Zn(2+)-binding site is contributed by D142. E176 functions as the Proton acceptor in the catalytic mechanism. Positions 177, 199, and 381 each coordinate Zn(2+).

Belongs to the peptidase M20B family. Zn(2+) serves as cofactor.

It localises to the cytoplasm. The enzyme catalyses Release of the N-terminal residue from a tripeptide.. Functionally, cleaves the N-terminal amino acid of tripeptides. This Streptococcus pneumoniae (strain ATCC 700669 / Spain 23F-1) protein is Peptidase T.